The following is a 248-amino-acid chain: Homeobox-leucine zipper protein HOX15 (248 aa).

A disordered region spans residues methionine 1–leucine 44. Over residues proline 32–leucine 44 the composition is skewed to low complexity. Positions asparagine 91–glutamine 150 form a DNA-binding region, homeobox. The tract at residues lysine 149–alanine 193 is leucine-zipper. The tract at residues proline 223 to cysteine 248 is disordered.

Belongs to the HD-ZIP homeobox family. Class II subfamily. In terms of tissue distribution, expressed in seedlings, stems, leaf blades and panicles.

It localises to the nucleus. In terms of biological role, probable transcription factor. The sequence is that of Homeobox-leucine zipper protein HOX15 (HOX15) from Oryza sativa subsp. indica (Rice).